A 581-amino-acid chain; its full sequence is Frizzled-8 (581 aa).

A signal peptide spans 1–23 (MESLSLSLLLLVSWLQGSQCAAA). The FZ domain occupies 24–144 (KELSCQEITV…GNPDTLCMDY (121 aa)). Topologically, residues 24–239 (KELSCQEITV…PEERTFTEFW (216 aa)) are extracellular. Disulfide bonds link cysteine 28–cysteine 89, cysteine 36–cysteine 82, cysteine 73–cysteine 111, cysteine 100–cysteine 141, and cysteine 104–cysteine 128. A glycan (N-linked (GlcNAc...) asparagine) is linked at asparagine 42. 64–71 (QFWPLVVI) is a binding site for hexadecanoate. The tract at residues 88–93 (ICLEDY) is wnt-binding. The wnt-binding stretch occupies residues 140 to 146 (LCMDYYN). A glycan (N-linked (GlcNAc...) asparagine) is linked at asparagine 146. The disordered stretch occupies residues 151-189 (TTAAPSHPEPPKPPARSVPKGRTRVEPPRSRSRATGCES). The span at 157–166 (HPEPPKPPAR) shows a compositional bias: pro residues. Residues 240–260 (IGLWSVLCFASTFATVSTFLI) traverse the membrane as a helical segment. Topologically, residues 261-271 (DMERFKYPERP) are cytoplasmic. A helical transmembrane segment spans residues 272-292 (IIFLSACYLLVSTGYLIRLIA). The Extracellular segment spans residues 293-320 (GHEKVACSRGELDLEHIIHYETTGPALC). A helical membrane pass occupies residues 321 to 341 (TLVFLLIYFFGMASSIWWVIL). At 342 to 377 (SLTWFLAAGMKWGNEAIAGYSQYFHLAAWLVPSIKS) the chain is on the cytoplasmic side. A helical transmembrane segment spans residues 378–398 (IAVLALSSVDGDPVAGICFVG). At 399-407 (NQNLDNLRG) the chain is on the extracellular side. Residues 408-428 (FVLAPLVIYLFIGSMFLLAGF) traverse the membrane as a helical segment. The Cytoplasmic portion of the chain corresponds to 429-454 (VSLFRIRSVIKQGGTKTDKLEKLMIR). The chain crosses the membrane as a helical span at residues 455 to 475 (IGIFSVLYTVPATIVVACFFY). At 476–505 (EQHNRQGWEVAHNCNSCQPEMAQPHRPDYA) the chain is on the extracellular side. A helical transmembrane segment spans residues 506-526 (VFMLKYFMCLVVGITSGVWIW). Over 527 to 581 (SGKTLESWRAFCTRCCWGSKATGGSMYSDVSTGLTWRSGTGSSVSCPKQMPLSQV) the chain is Cytoplasmic. Positions 529-534 (KTLESW) match the Lys-Thr-X-X-X-Trp motif, mediates interaction with the PDZ domain of Dvl family members motif. The PDZ-binding motif lies at 579–581 (SQV).

It belongs to the G-protein coupled receptor Fz/Smo family. As to quaternary structure, interacts with lypd6 and the interaction is strongly enhanced by wnt3a.

It is found in the membrane. It localises to the cell membrane. Functionally, receptor for Wnt proteins. Most of frizzled receptors are coupled to the beta-catenin canonical signaling pathway, which leads to the activation of disheveled proteins, inhibition of GSK-3 kinase, nuclear accumulation of beta-catenin and activation of Wnt target genes. A second signaling pathway involving PKC and calcium fluxes has been seen for some family members, but it is not yet clear if it represents a distinct pathway or if it can be integrated in the canonical pathway, as PKC seems to be required for Wnt-mediated inactivation of GSK-3 kinase. Both pathways seem to involve interactions with G-proteins. May be involved in transduction and intercellular transmission of polarity information during tissue morphogenesis and/or in differentiated tissues. Activation by Wnt8, Wnt5A or Wnt3A induces expression of beta-catenin target genes. Displays an axis-inducing activity. In Xenopus laevis (African clawed frog), this protein is Frizzled-8 (fzd8).